A 70-amino-acid polypeptide reads, in one-letter code: Small ribosomal subunit protein bS21 (70 aa).

A disordered region spans residues 43 to 70; that stretch reads TERKRKAAAAVKRQHKRLRSLTLPPKLY. Residues 45-61 show a composition bias toward basic residues; the sequence is RKRKAAAAVKRQHKRLR.

Belongs to the bacterial ribosomal protein bS21 family.

This chain is Small ribosomal subunit protein bS21, found in Dechloromonas aromatica (strain RCB).